The following is a 306-amino-acid chain: Elongation factor Ts (306 aa).

The interval 80 to 83 is involved in Mg(2+) ion dislocation from EF-Tu; sequence TDFV.

This sequence belongs to the EF-Ts family.

It is found in the cytoplasm. Associates with the EF-Tu.GDP complex and induces the exchange of GDP to GTP. It remains bound to the aminoacyl-tRNA.EF-Tu.GTP complex up to the GTP hydrolysis stage on the ribosome. This Leptothrix cholodnii (strain ATCC 51168 / LMG 8142 / SP-6) (Leptothrix discophora (strain SP-6)) protein is Elongation factor Ts.